A 313-amino-acid chain; its full sequence is Calcyphosin-2 (313 aa).

3 EF-hand domains span residues 144 to 179 (RILTGLGKYFQQLDKEGNGLLDKADFKQALKVFHLE), 180 to 215 (VSEKDFESAWLILDDNGNGKVDYGEFKRGIIGEMNE), and 216 to 251 (YRKSYVRKAFMKLDFNKTGSVPITNIRKCYCAKKHS). Positions 193, 195, 197, 199, and 204 each coordinate Ca(2+).

The chain is Calcyphosin-2 (CAPS2) from Macaca fascicularis (Crab-eating macaque).